The chain runs to 373 residues: Protein-glutamate methylesterase/protein-glutamine glutaminase 1 (373 aa).

Residues 16–133 (RVVVVDDSAL…ASGLTELSDQ (118 aa)) form the Response regulatory domain. Residue Asp-67 is modified to 4-aspartylphosphate. One can recognise a CheB-type methylesterase domain in the interval 175–367 (RVSTEKLICI…PALIAKLSSA (193 aa)). Active-site residues include Ser-187, His-213, and Asp-309.

The protein belongs to the CheB family. Phosphorylated by CheA. Phosphorylation of the N-terminal regulatory domain activates the methylesterase activity.

It is found in the cytoplasm. It catalyses the reaction [protein]-L-glutamate 5-O-methyl ester + H2O = L-glutamyl-[protein] + methanol + H(+). The enzyme catalyses L-glutaminyl-[protein] + H2O = L-glutamyl-[protein] + NH4(+). Functionally, involved in chemotaxis. Part of a chemotaxis signal transduction system that modulates chemotaxis in response to various stimuli. Catalyzes the demethylation of specific methylglutamate residues introduced into the chemoreceptors (methyl-accepting chemotaxis proteins or MCP) by CheR. Also mediates the irreversible deamidation of specific glutamine residues to glutamic acid. This Albidiferax ferrireducens (strain ATCC BAA-621 / DSM 15236 / T118) (Rhodoferax ferrireducens) protein is Protein-glutamate methylesterase/protein-glutamine glutaminase 1.